A 600-amino-acid chain; its full sequence is NADH-quinone oxidoreductase subunit C/D (600 aa).

Positions 1–190 (MVNNMTDLTA…SPFELTKAKQ (190 aa)) are NADH dehydrogenase I subunit C. An NADH dehydrogenase I subunit D region spans residues 214–600 (DFMFLNLGPN…IDFVMSDVDR (387 aa)).

The protein in the N-terminal section; belongs to the complex I 30 kDa subunit family. In the C-terminal section; belongs to the complex I 49 kDa subunit family. As to quaternary structure, NDH-1 is composed of 13 different subunits. Subunits NuoB, CD, E, F, and G constitute the peripheral sector of the complex.

It is found in the cell inner membrane. The catalysed reaction is a quinone + NADH + 5 H(+)(in) = a quinol + NAD(+) + 4 H(+)(out). Functionally, NDH-1 shuttles electrons from NADH, via FMN and iron-sulfur (Fe-S) centers, to quinones in the respiratory chain. The immediate electron acceptor for the enzyme in this species is believed to be ubiquinone. Couples the redox reaction to proton translocation (for every two electrons transferred, four hydrogen ions are translocated across the cytoplasmic membrane), and thus conserves the redox energy in a proton gradient. The chain is NADH-quinone oxidoreductase subunit C/D from Escherichia coli O157:H7.